Reading from the N-terminus, the 419-residue chain is Putative zinc metalloprotease spr0242 (419 aa).

Histidine 18 contacts Zn(2+). Residue glutamate 19 is part of the active site. Histidine 22 provides a ligand contact to Zn(2+). 3 helical membrane passes run 169–191 (LITN…WVLI), 345–367 (ILYF…IPAL), and 388–410 (EIET…AVTW).

It belongs to the peptidase M50B family. Requires Zn(2+) as cofactor.

It is found in the cell membrane. This Streptococcus pneumoniae (strain ATCC BAA-255 / R6) protein is Putative zinc metalloprotease spr0242.